The following is a 465-amino-acid chain: Serine carboxypeptidase 24 (465 aa).

An N-terminal signal peptide occupies residues 1-24 (MARTHFIFLLLVALLSTTFPSSSS). Residues Asn-54, Asn-105, and Asn-139 are each glycosylated (N-linked (GlcNAc...) asparagine). 3 cysteine pairs are disulfide-bonded: Cys-88–Cys-349, Cys-249–Cys-260, and Cys-285–Cys-317. Residue Ser-181 is part of the active site. N-linked (GlcNAc...) asparagine glycosylation is found at Asn-250, Asn-293, and Asn-338. The propeptide at 287–316 (AAQQKKNTTGFFVRMKNTLLRRRLVSGYDP) is linker peptide. Active-site residues include Asp-386 and His-438.

It belongs to the peptidase S10 family. As to quaternary structure, heterodimer. Post-translationally, N-glycosylated. As to expression, expressed in shoots, leaves, cauline leaves, siliques and flowers. Expressed a low levels in roots and stems.

Its subcellular location is the secreted. It is found in the extracellular space. It carries out the reaction Preferential release of a C-terminal arginine or lysine residue.. Completely inhibited by phenylmethylsulfonyl fluoride (PMSF) and partially by leupeptin. Active serine carboxypeptidase with broad substrate preference, including basic and hydrophilic groups. Processes a protein involved in an early event in the brassinosteroid signaling pathway. This Arabidopsis thaliana (Mouse-ear cress) protein is Serine carboxypeptidase 24 (SCPL24).